The following is a 391-amino-acid chain: Elongation factor Tu (391 aa).

Residues 10-201 (KPHVNIGTIG…EVDNYIPTPE (192 aa)) enclose the tr-type G domain. Residues 19-26 (GHVDHGKT) form a G1 region. 19–26 (GHVDHGKT) contacts GTP. Residue Thr26 participates in Mg(2+) binding. The tract at residues 55-59 (GITIS) is G2. The segment at 76 to 79 (DCPG) is G3. Residues 76–80 (DCPGH) and 131–134 (NKVD) each bind GTP. The segment at 131–134 (NKVD) is G4. Residues 169-171 (SAL) are G5.

It belongs to the TRAFAC class translation factor GTPase superfamily. Classic translation factor GTPase family. EF-Tu/EF-1A subfamily. Monomer.

The protein localises to the cytoplasm. The catalysed reaction is GTP + H2O = GDP + phosphate + H(+). Its function is as follows. GTP hydrolase that promotes the GTP-dependent binding of aminoacyl-tRNA to the A-site of ribosomes during protein biosynthesis. In Bartonella henselae (strain ATCC 49882 / DSM 28221 / CCUG 30454 / Houston 1) (Rochalimaea henselae), this protein is Elongation factor Tu.